Reading from the N-terminus, the 247-residue chain is Proteasome subunit alpha type-7 (247 aa).

This sequence belongs to the peptidase T1A family. As to quaternary structure, the 26S proteasome consists of a 20S proteasome core and two 19S regulatory subunits. The 20S proteasome core is composed of 28 subunits that are arranged in four stacked rings, resulting in a barrel-shaped structure. The two end rings are each formed by seven alpha subunits, and the two central rings are each formed by seven beta subunits. The catalytic chamber with the active sites is on the inside of the barrel.

Its subcellular location is the cytoplasm. It localises to the nucleus. Its function is as follows. The proteasome is a multicatalytic proteinase complex which is characterized by its ability to cleave peptides with Arg, Phe, Tyr, Leu, and Glu adjacent to the leaving group at neutral or slightly basic pH. The proteasome has an ATP-dependent proteolytic activity. This chain is Proteasome subunit alpha type-7 (PSA4), found in Trypanosoma brucei brucei.